Reading from the N-terminus, the 236-residue chain is 2-C-methyl-D-erythritol 4-phosphate cytidylyltransferase (236 aa).

Belongs to the IspD/TarI cytidylyltransferase family. IspD subfamily.

It catalyses the reaction 2-C-methyl-D-erythritol 4-phosphate + CTP + H(+) = 4-CDP-2-C-methyl-D-erythritol + diphosphate. The protein operates within isoprenoid biosynthesis; isopentenyl diphosphate biosynthesis via DXP pathway; isopentenyl diphosphate from 1-deoxy-D-xylulose 5-phosphate: step 2/6. Functionally, catalyzes the formation of 4-diphosphocytidyl-2-C-methyl-D-erythritol from CTP and 2-C-methyl-D-erythritol 4-phosphate (MEP). In Burkholderia vietnamiensis (strain G4 / LMG 22486) (Burkholderia cepacia (strain R1808)), this protein is 2-C-methyl-D-erythritol 4-phosphate cytidylyltransferase.